The chain runs to 196 residues: Probable malonic semialdehyde reductase RutE (196 aa).

Belongs to the nitroreductase family. HadB/RutE subfamily. Requires FMN as cofactor.

The catalysed reaction is 3-hydroxypropanoate + NADP(+) = 3-oxopropanoate + NADPH + H(+). Functionally, may reduce toxic product malonic semialdehyde to 3-hydroxypropionic acid, which is excreted. This chain is Probable malonic semialdehyde reductase RutE, found in Escherichia coli O81 (strain ED1a).